Consider the following 335-residue polypeptide: Biotin synthase (335 aa).

Residues 47 to 276 form the Radical SAM core domain; the sequence is FYGKKVKLNM…SKEIRISGGR (230 aa). The [4Fe-4S] cluster site is built by Cys-65, Cys-69, and Cys-72. The [2Fe-2S] cluster site is built by Cys-109, Cys-141, Cys-201, and Arg-271.

Belongs to the radical SAM superfamily. Biotin synthase family. As to quaternary structure, homodimer. [4Fe-4S] cluster is required as a cofactor. Requires [2Fe-2S] cluster as cofactor.

The catalysed reaction is (4R,5S)-dethiobiotin + (sulfur carrier)-SH + 2 reduced [2Fe-2S]-[ferredoxin] + 2 S-adenosyl-L-methionine = (sulfur carrier)-H + biotin + 2 5'-deoxyadenosine + 2 L-methionine + 2 oxidized [2Fe-2S]-[ferredoxin]. The protein operates within cofactor biosynthesis; biotin biosynthesis; biotin from 7,8-diaminononanoate: step 2/2. In terms of biological role, catalyzes the conversion of dethiobiotin (DTB) to biotin by the insertion of a sulfur atom into dethiobiotin via a radical-based mechanism. This Bacillus subtilis subsp. natto protein is Biotin synthase.